The sequence spans 589 residues: MSVSVHENRKSRASSGSINIYLFHKSSYADSVLTHLNLLRQQRLFTDVLLHAGNRTFPCHRAVLAACSRYFEAMFSGGLKESQDSEVNFDNSIHPEVLELLLDYAYSSRVIINEENAESLLEAGDMLEFQDIRDACAEFLEKNLHPTNCLGMLLLSDAHQCTKLYELSWRMCLSNFQTIRKNEDFLQLPQDMVVQLLSSEELETEDERLVYESAMNWISYDLKKRYCYLPELLQTVRLALLPAIYLMENVAMEELITKQRKSKEIVEEAIRCKLKILQNDGVVTSLCARPRKTGHALFLLGGQTFMCDKLYLVDQKAKEIIPKADIPSPRKEFSACAIGCKVYITGGRGSENGVSKDVWVYDTLHEEWSKAAPMLVARFGHGSAELKHCLYVVGGHTAATGCLPASPSVSLKQVEQYDPTTNKWTMVAPLREGVSNAAVVSAKLKLFAFGGTSVSHDKLPKVQCYDQCENRWSVPATCPQPWRYTAAAVLGNQIFIMGGDTEFSACSAYKFNSETYQWTKVGDVTAKRMSCHAVASGNKLYVVGGYFGIQRCKTLDCYDPTLDVWNSITTVPYSLIPTAFVSTWKHLPS.

The region spanning Thr-46 to Glu-114 is the BTB domain. Kelch repeat units follow at residues Ala-296–Cys-340, Lys-341–His-388, Cys-389–Leu-444, Leu-446–Asn-492, Ile-494–Asn-538, and Lys-539–Lys-585.

As to quaternary structure, binds to RB1. Hypophosphorylated RB1 associates with ENC1 during neuronal differentiation, while hyperphosphorylated RB1 associates with ENC1 in undifferentiating cells. Part of a complex that contains CUL3, RBX1 and ENC1. Interacts indirectly with KEAP1. In terms of processing, ubiquitinated by E3 ubiquitin ligase complex formed by CUL3 and RBX1 and probably targeted for proteasome-independent degradation. Quinone-induced oxidative stress increases its ubiquitination. As to expression, primarily expressed in the nervous system.

The protein resides in the nucleus matrix. Its subcellular location is the cytoplasm. It is found in the cytoskeleton. In terms of biological role, actin-binding protein involved in the regulation of neuronal process formation and in differentiation of neural crest cells. Down-regulates transcription factor NF2L2/NRF2 by decreasing the rate of protein synthesis and not via a ubiquitin-mediated proteasomal degradation mechanism. This is Ectoderm-neural cortex protein 1 (Enc1) from Mus musculus (Mouse).